The following is a 369-amino-acid chain: Dual-specificity RNA methyltransferase RlmN (369 aa).

Residue Glu-94 is the Proton acceptor of the active site. A Radical SAM core domain is found at 113–346 (ESEKWTMCLS…CTIRESRGID (234 aa)). A disulfide bond links Cys-120 and Cys-351. [4Fe-4S] cluster contacts are provided by Cys-127, Cys-131, and Cys-134. Residues 177 to 178 (GE), Ser-209, 232 to 234 (SLH), and Asn-308 each bind S-adenosyl-L-methionine. Cys-351 functions as the S-methylcysteine intermediate in the catalytic mechanism.

It belongs to the radical SAM superfamily. RlmN family. It depends on [4Fe-4S] cluster as a cofactor.

The protein resides in the cytoplasm. It catalyses the reaction adenosine(2503) in 23S rRNA + 2 reduced [2Fe-2S]-[ferredoxin] + 2 S-adenosyl-L-methionine = 2-methyladenosine(2503) in 23S rRNA + 5'-deoxyadenosine + L-methionine + 2 oxidized [2Fe-2S]-[ferredoxin] + S-adenosyl-L-homocysteine. The catalysed reaction is adenosine(37) in tRNA + 2 reduced [2Fe-2S]-[ferredoxin] + 2 S-adenosyl-L-methionine = 2-methyladenosine(37) in tRNA + 5'-deoxyadenosine + L-methionine + 2 oxidized [2Fe-2S]-[ferredoxin] + S-adenosyl-L-homocysteine. Specifically methylates position 2 of adenine 2503 in 23S rRNA and position 2 of adenine 37 in tRNAs. m2A2503 modification seems to play a crucial role in the proofreading step occurring at the peptidyl transferase center and thus would serve to optimize ribosomal fidelity. This chain is Dual-specificity RNA methyltransferase RlmN, found in Helicobacter hepaticus (strain ATCC 51449 / 3B1).